Here is a 399-residue protein sequence, read N- to C-terminus: Nuclear hormone receptor family member nhr-125 (399 aa).

The segment at residues 10-80 (PFSCRICNQK…MGMDTTKFQY (71 aa)) is a DNA-binding region (nuclear receptor). NR C4-type zinc fingers lie at residues 13 to 33 (CRICNQKAHGNHFGVLTCRAC) and 50 to 63 (CQKGGCSRNFCKRC). Residues 149–392 (QLENLTEGFK…EKLQKSQFSI (244 aa)) enclose the NR LBD domain.

Belongs to the nuclear hormone receptor family.

It is found in the nucleus. Functionally, orphan nuclear receptor. This is Nuclear hormone receptor family member nhr-125 (nhr-125) from Caenorhabditis elegans.